Here is a 462-residue protein sequence, read N- to C-terminus: Protoheme IX farnesyltransferase, mitochondrial (462 aa).

The transit peptide at 1 to 30 (MSYFPRTYAHLMRNVLAHNKGNIYLQIGTQ) directs the protein to the mitochondrion. Transmembrane regions (helical) follow at residues 158 to 178 (TILV…PASV), 234 to 254 (LIGT…VAIL), 274 to 294 (IINT…GWAA), 298 to 318 (LSHP…FPHF), 352 to 372 (YSIL…TDWY), 373 to 393 (YQID…KFYW), and 425 to 445 (FMAS…HKKG).

This sequence belongs to the UbiA prenyltransferase family. Forms ~370 kDa homooligomeric complexes.

It is found in the mitochondrion. Its subcellular location is the mitochondrion membrane. The enzyme catalyses heme b + (2E,6E)-farnesyl diphosphate + H2O = Fe(II)-heme o + diphosphate. It participates in porphyrin-containing compound metabolism; heme O biosynthesis; heme O from protoheme: step 1/1. Its activity is regulated as follows. Positively regulated by the hydroxylated intermediate (heme I) formed at the subsequent step, or by HAS/COX15 itself. Functionally, catalyzes the first reaction in the biosynthesis of heme A, a prosthetic group of mitochondrial cytochrome c oxidase (CcO). Heme A is synthesized from heme B by two sequential enzymatic reactions catalyzed by heme O synthase (HOS/COX10) and heme A synthase (HAS/COX15). HOS converts heme B (protoheme IX) to heme O by substitution of the vinyl group on carbon 2 of heme B porphyrin ring with a hydroxyethyl farnesyl side group. This chain is Protoheme IX farnesyltransferase, mitochondrial (COX10), found in Saccharomyces cerevisiae (strain ATCC 204508 / S288c) (Baker's yeast).